A 191-amino-acid chain; its full sequence is TATA-box-binding protein (191 aa).

2 repeat units span residues 18–94 and 108–185.

It belongs to the TBP family. As to quaternary structure, belongs to the TFIID complex together with the TBP-associated factors (TAFs). Binds DNA as monomer.

It localises to the nucleus. General transcription factor that functions at the core of the DNA-binding multiprotein factor TFIID. Binding of TFIID to the TATA box is the initial transcriptional step of the pre-initiation complex (PIC), playing a role in the activation of eukaryotic genes transcribed by RNA polymerase II. In Acetabularia peniculus (Green alga), this protein is TATA-box-binding protein.